A 485-amino-acid polypeptide reads, in one-letter code: Sodium-coupled neutral amino acid symporter 1 (485 aa).

The Cytoplasmic portion of the chain corresponds to 1 to 74 (MMHFKSGLEL…EYIPGTTSLG (74 aa)). At Ser-6 the chain carries Phosphoserine. The residue at position 11 (Thr-11) is a Phosphothreonine. Phosphoserine occurs at positions 25, 28, 49, and 52. Position 54 is a phosphothreonine (Thr-54). Ser-56 bears the Phosphoserine mark. Residues 75–97 (MSVFNLSNAIMGSGILGLAFALA) traverse the membrane as a helical segment. Residues 98 to 112 (NTGILLFLILLTSVT) lie on the Extracellular side of the membrane. Residues 113–133 (LLSIYSINLLLICSKETGCMV) form a helical membrane-spanning segment. Over 134–148 (YEKLGEQVFGTTGKL) the chain is Cytoplasmic. Residues 149–169 (VIFGATSLQNTGAMLSYLFIV) form a helical membrane-spanning segment. Topologically, residues 170–188 (KNELPSAIKSLMGEEDAFS) are extracellular. Residues 189 to 211 (AWYVDGRVLVVMVTFGIILPLCL) form a helical membrane-spanning segment. The Cytoplasmic portion of the chain corresponds to 212–216 (LKNLG). Residues 217 to 237 (YLGYTSGFSLSCMMFFLIVVI) traverse the membrane as a helical segment. Residues 238–273 (YKKFQTPCMSVEQNSTVSANVTDACTPKYVTFNSKT) are Extracellular-facing. Cys-245 and Cys-262 are joined by a disulfide. N-linked (GlcNAc...) asparagine glycans are attached at residues Asn-251 and Asn-257. The helical transmembrane segment at 274–294 (VYALPTIAFAFVCHPSVLPIY) threads the bilayer. The Cytoplasmic segment spans residues 295–310 (SELKDRSQKKMQMVSN). Residues 311–331 (ISFFAMFVMYFLTAIFGYLTF) form a helical membrane-spanning segment. Residues 332–348 (YEKVQSDLLHKYQSTGD) lie on the Extracellular side of the membrane. A helical transmembrane segment spans residues 349–369 (ILILTVRLAVIVAVILTVPVL). The Cytoplasmic portion of the chain corresponds to 370 to 391 (FFTVRSSLFELAKKTKFHLCRH). Residues 392 to 412 (VLVTIILLIIINLLVIFIPSM) form a helical membrane-spanning segment. Residues 413-414 (KD) are Extracellular-facing. A helical membrane pass occupies residues 415-435 (IFGVVGVTSANMLIFILPSSL). Residues 436 to 450 (YLKITNQDGDKGTQR) are Cytoplasmic-facing. A helical transmembrane segment spans residues 451–471 (IWAALFLGLGVLFSLISIPLV). Over 472 to 485 (IYDWACSSGTDEGH) the chain is Extracellular.

Belongs to the amino acid/polyamine transporter 2 family. In terms of processing, N-glycosylation plays an important role in the L-glutamine transport. Specifically expressed in brain and retina (at protein level). Also detected in spleen, small intestine and lung.

It localises to the cell membrane. It carries out the reaction L-glutamine(in) + Na(+)(in) = L-glutamine(out) + Na(+)(out). The catalysed reaction is L-alanine(in) + Na(+)(in) = L-alanine(out) + Na(+)(out). It catalyses the reaction L-histidine(in) + Na(+)(in) = L-histidine(out) + Na(+)(out). The enzyme catalyses L-asparagine(in) + Na(+)(in) = L-asparagine(out) + Na(+)(out). It carries out the reaction L-serine(in) + Na(+)(in) = L-serine(out) + Na(+)(out). The catalysed reaction is L-cysteine(in) + Na(+)(in) = L-cysteine(out) + Na(+)(out). It catalyses the reaction L-methionine(in) + Na(+)(in) = L-methionine(out) + Na(+)(out). The enzyme catalyses glycine(in) + Na(+)(in) = glycine(out) + Na(+)(out). It carries out the reaction L-threonine(in) + Na(+)(in) = L-threonine(out) + Na(+)(out). The catalysed reaction is L-proline(in) + Na(+)(in) = L-proline(out) + Na(+)(out). With respect to regulation, inhibited by alpha-(methylamino)isobutyric acid (MeAIB). Inhibited by lithium, potassium, choline ions, N-methylglucamine. The pH dependence has an allosteric effect on the transport. In terms of biological role, symporter that cotransports short-chain neutral amino acids and sodium ions from the extraccellular to the intracellular side of the cell membrane. The transport is elctrogenic, pH dependent and driven by the Na(+) electrochemical gradient. Participates in the astroglia-derived glutamine transport into GABAergic interneurons for neurotransmitter GABA de novo synthesis. May also contributes to amino acid transport in placental trophoblast. Regulates synaptic plasticity. The protein is Sodium-coupled neutral amino acid symporter 1 of Mus musculus (Mouse).